A 210-amino-acid polypeptide reads, in one-letter code: Peptidyl-tRNA hydrolase (210 aa).

Y30 is a binding site for tRNA. H35 functions as the Proton acceptor in the catalytic mechanism. Positions 81, 83, and 129 each coordinate tRNA.

Belongs to the PTH family. As to quaternary structure, monomer.

It localises to the cytoplasm. The enzyme catalyses an N-acyl-L-alpha-aminoacyl-tRNA + H2O = an N-acyl-L-amino acid + a tRNA + H(+). Functionally, hydrolyzes ribosome-free peptidyl-tRNAs (with 1 or more amino acids incorporated), which drop off the ribosome during protein synthesis, or as a result of ribosome stalling. Its function is as follows. Catalyzes the release of premature peptidyl moieties from peptidyl-tRNA molecules trapped in stalled 50S ribosomal subunits, and thus maintains levels of free tRNAs and 50S ribosomes. The chain is Peptidyl-tRNA hydrolase from Bordetella petrii (strain ATCC BAA-461 / DSM 12804 / CCUG 43448).